A 1188-amino-acid polypeptide reads, in one-letter code: Zinc finger SWIM domain-containing protein 5 (1188 aa).

The span at 1 to 10 (MAEGGEREEL) shows a compositional bias: basic and acidic residues. 2 disordered regions span residues 1–46 (MAEG…GAGG) and 123–171 (AGAA…TGTA). Low complexity-rich tracts occupy residues 126–136 (AAGAAGASPVE) and 146–155 (AAPAGSAPGA). Over residues 156–171 (AGAGSSPGLGAGTGTA) the composition is skewed to gly residues. The segment at 222-259 (YKVAISFDRCKITSVSCGCGNKDIFYCAHVVALSLYRI) adopts an SWIM-type zinc-finger fold.

This is Zinc finger SWIM domain-containing protein 5 (Zswim5) from Mus musculus (Mouse).